A 322-amino-acid chain; its full sequence is Nitrilase (322 aa).

Residues 5-283 (VRVGAVQSEP…EAILTADIDL (279 aa)) form the CN hydrolase domain. Catalysis depends on Glu45, which acts as the Proton acceptor. Residue Lys127 is part of the active site. Cys162 (nucleophile) is an active-site residue.

The protein belongs to the carbon-nitrogen hydrolase superfamily. Nitrilase family.

It carries out the reaction a nitrile + 2 H2O = a carboxylate + NH4(+). Functionally, nitrilase that hydrolyzes preferentially 4-cyanopyridine. This Talaromyces marneffei (strain ATCC 18224 / CBS 334.59 / QM 7333) (Penicillium marneffei) protein is Nitrilase.